Consider the following 292-residue polypeptide: MNNHFKCIGIVGHPRHPTALTTHEMLYRWLCTKGYEVIVEQQIAHELQLKNVKTGTLAEIGQQADLAVVVGGDGNMLGAARTLARYDIKVIGINRGNLGFLTDLDPDNAQQQLADVLEGHYISEKRFLLEAQVCQQDCQKRISTAINEVVLHPGKVAHMIEFEVYIDEIFAFSQRSDGLIISTPTGSTAYSLSAGGPILTPSLDAITLVPMFPHTLSARPLVINSSSTIRLRFSHRRNDLEISCDSQIALPIQEGEDVLIRRCDYHLNLIHPKDYSYFNTLSTKLGWSKKLF.

Catalysis depends on D73, which acts as the Proton acceptor. NAD(+)-binding positions include 73–74 (DG), 147–148 (NE), H158, R175, D177, 188–193 (TAYSLS), and Q247.

It belongs to the NAD kinase family. The cofactor is a divalent metal cation.

It localises to the cytoplasm. It carries out the reaction NAD(+) + ATP = ADP + NADP(+) + H(+). Involved in the regulation of the intracellular balance of NAD and NADP, and is a key enzyme in the biosynthesis of NADP. Catalyzes specifically the phosphorylation on 2'-hydroxyl of the adenosine moiety of NAD to yield NADP. In Escherichia coli (strain UTI89 / UPEC), this protein is NAD kinase.